A 120-amino-acid chain; its full sequence is NAD(P)H-quinone oxidoreductase subunit 3, chloroplastic (120 aa).

A run of 3 helical transmembrane segments spans residues 9 to 29 (IFWAFLIISSVIPILAFLISG), 64 to 84 (MFALVFVVFDVETVFLYPWAM), and 88 to 108 (VLGLSVFIEALIFVLILIVGS).

It belongs to the complex I subunit 3 family. NDH is composed of at least 16 different subunits, 5 of which are encoded in the nucleus.

Its subcellular location is the plastid. It is found in the chloroplast thylakoid membrane. The enzyme catalyses a plastoquinone + NADH + (n+1) H(+)(in) = a plastoquinol + NAD(+) + n H(+)(out). It carries out the reaction a plastoquinone + NADPH + (n+1) H(+)(in) = a plastoquinol + NADP(+) + n H(+)(out). In terms of biological role, NDH shuttles electrons from NAD(P)H:plastoquinone, via FMN and iron-sulfur (Fe-S) centers, to quinones in the photosynthetic chain and possibly in a chloroplast respiratory chain. The immediate electron acceptor for the enzyme in this species is believed to be plastoquinone. Couples the redox reaction to proton translocation, and thus conserves the redox energy in a proton gradient. This is NAD(P)H-quinone oxidoreductase subunit 3, chloroplastic from Manihot esculenta (Cassava).